The primary structure comprises 144 residues: Mating factor alpha (144 aa).

Positions 1 to 19 (MRFPSIFTAVLFAASSALA) form a signal peptide, or 20.

Functionally, the active factor is excreted into the culture medium by haploid cells of the alpha mating type and acts on cells of the opposite mating type (type A). It mediates the conjugation process between the two types by inhibiting the initiation of DNA synthesis in type a cells and synchronizing them with type alpha. This Saccharomyces uvarum (Yeast) protein is Mating factor alpha.